Here is a 296-residue protein sequence, read N- to C-terminus: Nucleotide-binding protein SPT_1506 (296 aa).

Position 13 to 20 (13 to 20 (GMSGAGKT)) interacts with ATP. Residue 63–66 (DMRS) coordinates GTP.

The protein belongs to the RapZ-like family.

Functionally, displays ATPase and GTPase activities. This is Nucleotide-binding protein SPT_1506 from Streptococcus pneumoniae (strain Taiwan19F-14).